A 293-amino-acid chain; its full sequence is Probable adenylate kinase 1, chloroplastic (293 aa).

Residues 1-26 constitute a mitochondrion transit peptide; it reads MAAVQRLLRASASGGAAAAAAAARRR. 70-75 contributes to the ATP binding site; the sequence is GVGKGT. An NMP region spans residues 90–119; that stretch reads ATGDLVRDELASSGPLSVQLAEIVNQGKLV. Residues Thr91, Arg96, 117–119, 147–150, and Gln154 each bind AMP; these read KLV and GFPR. An LID region spans residues 183–231; that stretch reads GRRICGQCGKNFNLACIDVKGENGLPPIYMAPLLPPNNCMSKLITRADD. Residues Arg184 and 193-194 contribute to the ATP site; that span reads NF. Positions 228 and 239 each coordinate AMP.

This sequence belongs to the adenylate kinase family.

It localises to the mitochondrion. It carries out the reaction AMP + ATP = 2 ADP. In terms of biological role, catalyzes the reversible transfer of the terminal phosphate group between ATP and AMP. Plays an important role in cellular energy homeostasis and in adenine nucleotide metabolism. The sequence is that of Probable adenylate kinase 1, chloroplastic from Oryza sativa subsp. japonica (Rice).